Reading from the N-terminus, the 727-residue chain is Ankyrin repeat domain-containing protein 6 (727 aa).

ANK repeat units follow at residues 9 to 38 (ALSE…RVAV), 41 to 70 (HGRT…DLDV), 74 to 103 (GDQT…ALDR), 107 to 136 (DGNT…NVLA), 140 to 169 (AGNT…RADL), 173 to 202 (AGDT…SVHE), 206 to 235 (AGDT…DTTI), and 239 to 268 (AGQT…VLRF). Positions 277–386 (KRERLKEERR…HRCSSPPPPH (110 aa)) are disordered. Basic and acidic residues predominate over residues 280–296 (RLKEERRAQSVPRDEVA). Polar residues predominate over residues 298–312 (SKGSVSAGDTPSSEQ). Positions 314–324 (VARKEEAREEF) are enriched in basic and acidic residues. Basic residues predominate over residues 363–379 (KNLHAHNHPKKRNRHRC). Residues 417 to 446 (LINKLENQLEATVEEIKAELGSVQDKMNTK) are a coiled coil. The segment covering 548–557 (PAAASDSSPP) has biased composition (low complexity). Disordered regions lie at residues 548 to 586 (PAAA…CTGS) and 601 to 657 (NEAA…TGPH). Residues 566–584 (LNSTATQRLQQELSSSDCT) show a composition bias toward polar residues. The segment covering 622–633 (KSGKSGPTRHRA) has biased composition (basic residues). The stretch at 682–727 (WYERKIEEARSQANQKAQQDKATLKEHIKSLEEELAKLRTRVQKEN) forms a coiled coil.

Interacts with AXN1, AXN2 and CSNK1E/CKI-epsilon.

Its function is as follows. Recruits CKI-epsilon to the beta-catenin degradation complex that consists of AXN1 or AXN2 and GSK3-beta and allows efficient phosphorylation of beta-catenin, thereby inhibiting beta-catenin/Tcf signals. The chain is Ankyrin repeat domain-containing protein 6 (ANKRD6) from Homo sapiens (Human).